The primary structure comprises 83 residues: uncharacterized protein (83 aa).

This is an uncharacterized protein from Escherichia coli (Bacteriophage T4).